The chain runs to 449 residues: Phosphomannomutase (449 aa).

Residue Ser97 is the Phosphoserine intermediate of the active site. Mg(2+) contacts are provided by Ser97, Asp237, Asp239, and Asp241.

It belongs to the phosphohexose mutase family. Mg(2+) is required as a cofactor.

The catalysed reaction is alpha-D-mannose 1-phosphate = D-mannose 6-phosphate. The protein operates within amino-acid biosynthesis. In terms of biological role, catalyzes the formation of mannose-1-P from mannose-6-P. Can also use glucose-6-P. The protein is Phosphomannomutase (manB) of Methanocaldococcus jannaschii (strain ATCC 43067 / DSM 2661 / JAL-1 / JCM 10045 / NBRC 100440) (Methanococcus jannaschii).